We begin with the raw amino-acid sequence, 295 residues long: 33 kDa chaperonin (295 aa).

Disulfide bonds link Cys-237–Cys-239 and Cys-270–Cys-273.

The protein belongs to the HSP33 family. In terms of processing, under oxidizing conditions two disulfide bonds are formed involving the reactive cysteines. Under reducing conditions zinc is bound to the reactive cysteines and the protein is inactive.

It is found in the cytoplasm. Redox regulated molecular chaperone. Protects both thermally unfolding and oxidatively damaged proteins from irreversible aggregation. Plays an important role in the bacterial defense system toward oxidative stress. The chain is 33 kDa chaperonin from Geobacillus sp. (strain WCH70).